The chain runs to 484 residues: MKFIVKLFPEIMMKSRPVRNRFSKILQGNIRNVLTRHDEQVKVILEWDKIIVRTENESAENKANLILLLSSTPGIAHFLEVTESVYTDLHDVYEQTLAMVGDSLDGKTFCVRIKRIGKHDFSSIDAERYVGGGLNQHTDTLGVKLKGPEITINLEINNEKLFFIDKKHPGLGGFPLGTQESVLSLISGGFDSGVSSYKLIKRGSRVHYCFFNLGGGAHEIGVKQVAYQLWNRFGSSHRVKFISIPFEPVVAEILEKVENGQMGVVLKRMMMRAATLMAERLGVEALITGEALGQVSSQTLRNLSVIDKVSDMLILRPLIATDKQDIVDCARVIGTAEISETIPEYCGVISQRPTVKAVMRKIEKQEEKFDLSLIEQVVNQAPTIDIRDIAKAVHKEILEVESVSQFAENEIVLDIRSLDEAEESPLDIEGVTIEHLPFFKLSNQFETLPQDKIYLLYCARGVMSKLQALYLKESGFDNVKVYRP.

Residues 63–167 (ANLILLLSST…NEKLFFIDKK (105 aa)) form the THUMP domain. ATP-binding positions include 185–186 (LI), Lys267, Gly289, and Gln298. An intrachain disulfide couples Cys346 to Cys458. In terms of domain architecture, Rhodanese spans 406–484 (FAENEIVLDI…GFDNVKVYRP (79 aa)). The active-site Cysteine persulfide intermediate is Cys458.

The protein belongs to the ThiI family.

The protein resides in the cytoplasm. The enzyme catalyses [ThiI sulfur-carrier protein]-S-sulfanyl-L-cysteine + a uridine in tRNA + 2 reduced [2Fe-2S]-[ferredoxin] + ATP + H(+) = [ThiI sulfur-carrier protein]-L-cysteine + a 4-thiouridine in tRNA + 2 oxidized [2Fe-2S]-[ferredoxin] + AMP + diphosphate. It catalyses the reaction [ThiS sulfur-carrier protein]-C-terminal Gly-Gly-AMP + S-sulfanyl-L-cysteinyl-[cysteine desulfurase] + AH2 = [ThiS sulfur-carrier protein]-C-terminal-Gly-aminoethanethioate + L-cysteinyl-[cysteine desulfurase] + A + AMP + 2 H(+). The protein operates within cofactor biosynthesis; thiamine diphosphate biosynthesis. Catalyzes the ATP-dependent transfer of a sulfur to tRNA to produce 4-thiouridine in position 8 of tRNAs, which functions as a near-UV photosensor. Also catalyzes the transfer of sulfur to the sulfur carrier protein ThiS, forming ThiS-thiocarboxylate. This is a step in the synthesis of thiazole, in the thiamine biosynthesis pathway. The sulfur is donated as persulfide by IscS. This is tRNA sulfurtransferase from Psychromonas ingrahamii (strain DSM 17664 / CCUG 51855 / 37).